Reading from the N-terminus, the 368-residue chain is Alanine racemase (368 aa).

Residue Lys-35 is the Proton acceptor; specific for D-alanine of the active site. Lys-35 carries the post-translational modification N6-(pyridoxal phosphate)lysine. Arg-130 contributes to the substrate binding site. Tyr-253 serves as the catalytic Proton acceptor; specific for L-alanine. Met-305 is a substrate binding site.

It belongs to the alanine racemase family. Pyridoxal 5'-phosphate serves as cofactor.

The enzyme catalyses L-alanine = D-alanine. It participates in amino-acid biosynthesis; D-alanine biosynthesis; D-alanine from L-alanine: step 1/1. Catalyzes the interconversion of L-alanine and D-alanine. May also act on other amino acids. This is Alanine racemase (alr) from Cupriavidus metallidurans (strain ATCC 43123 / DSM 2839 / NBRC 102507 / CH34) (Ralstonia metallidurans).